The primary structure comprises 296 residues: MPLPDLSTLSADQPVLIAGPTASGKSALALRIAERQGGVIVNADALQVHHAWRVLTARPSPQDEARAPHRLYGHVARGTPHSVGHWLREVTPLLSGQRPIIVGGTGLFFTALTQGLSEIPEVPAEVRARADALREGDFARMQADLGARDPETSARIDMANPMRVQRAWEVLETTGRPLARWQADTPPPLLPRSRAARFVLEAPKDWLAPRIARRFRQMLDQGALDEARAALPHWDAAAPWARAIGAPELIAHLRGEITLDAAEEAATRATRQYAKRQRTWFRARMRDWTPVPPGSA.

19-26 lines the ATP pocket; the sequence is GPTASGKS. A substrate-binding site is contributed by 21-26; the sequence is TASGKS.

It belongs to the IPP transferase family. In terms of assembly, monomer. Mg(2+) is required as a cofactor.

The catalysed reaction is adenosine(37) in tRNA + dimethylallyl diphosphate = N(6)-dimethylallyladenosine(37) in tRNA + diphosphate. Catalyzes the transfer of a dimethylallyl group onto the adenine at position 37 in tRNAs that read codons beginning with uridine, leading to the formation of N6-(dimethylallyl)adenosine (i(6)A). This Dinoroseobacter shibae (strain DSM 16493 / NCIMB 14021 / DFL 12) protein is tRNA dimethylallyltransferase.